Consider the following 242-residue polypeptide: tRNA (guanine-N(1)-)-methyltransferase (242 aa).

S-adenosyl-L-methionine contacts are provided by residues Gly-108 and 127-132 (IGDYVL).

Belongs to the RNA methyltransferase TrmD family. As to quaternary structure, homodimer.

The protein resides in the cytoplasm. It carries out the reaction guanosine(37) in tRNA + S-adenosyl-L-methionine = N(1)-methylguanosine(37) in tRNA + S-adenosyl-L-homocysteine + H(+). In terms of biological role, specifically methylates guanosine-37 in various tRNAs. In Lactobacillus acidophilus (strain ATCC 700396 / NCK56 / N2 / NCFM), this protein is tRNA (guanine-N(1)-)-methyltransferase.